Reading from the N-terminus, the 309-residue chain is Phytoene synthase (309 aa).

This sequence belongs to the phytoene/squalene synthase family. ATP serves as cofactor. Requires Mn(2+) as cofactor. Mg(2+) is required as a cofactor.

The protein operates within carotenoid biosynthesis; phytoene biosynthesis. Involved in the biosynthesis of carotenoids. Catalyzes the condensation of two molecules of geranylgeranyl diphosphate (GGPP) to give prephytoene diphosphate (PPPP) and the subsequent rearrangement of the cyclopropylcarbinyl intermediate to yield phytoene. In Pseudescherichia vulneris (Escherichia vulneris), this protein is Phytoene synthase (crtB).